The chain runs to 199 residues: Pyridoxal 5'-phosphate synthase subunit PdxT (199 aa).

Position 47 to 49 (47 to 49 (GES)) interacts with L-glutamine. Cysteine 79 serves as the catalytic Nucleophile. L-glutamine-binding positions include arginine 106 and 133-134 (IR). Active-site charge relay system residues include histidine 169 and glutamate 171.

It belongs to the glutaminase PdxT/SNO family. In terms of assembly, in the presence of PdxS, forms a dodecamer of heterodimers. Only shows activity in the heterodimer.

It carries out the reaction aldehydo-D-ribose 5-phosphate + D-glyceraldehyde 3-phosphate + L-glutamine = pyridoxal 5'-phosphate + L-glutamate + phosphate + 3 H2O + H(+). It catalyses the reaction L-glutamine + H2O = L-glutamate + NH4(+). The protein operates within cofactor biosynthesis; pyridoxal 5'-phosphate biosynthesis. Functionally, catalyzes the hydrolysis of glutamine to glutamate and ammonia as part of the biosynthesis of pyridoxal 5'-phosphate. The resulting ammonia molecule is channeled to the active site of PdxS. The protein is Pyridoxal 5'-phosphate synthase subunit PdxT of Desulfitobacterium hafniense (strain Y51).